The sequence spans 53 residues: Light-harvesting protein B800/850/890 beta-1 chain (53 aa).

Residues 1-19 (ADNMSLTGLSDEEAKEFHS) lie on the Cytoplasmic side of the membrane. The a bacteriochlorophyll site is built by His-18 and His-36. Residues 20 to 42 (IFMQSFLIFTAVAVVAHFLAWAW) traverse the membrane as a helical segment. At 43–53 (RPWIPGAEGYG) the chain is on the periplasmic side.

This sequence belongs to the antenna complex beta subunit family. The core complex is formed by different alpha and beta chains, binding bacteriochlorophyll molecules, and arranged most probably in tetrameric structures disposed around the reaction center. The non-pigmented gamma chains may constitute additional components.

Its subcellular location is the cell inner membrane. Antenna complexes are light-harvesting systems, which transfer the excitation energy to the reaction centers. This is Light-harvesting protein B800/850/890 beta-1 chain from Halorhodospira halophila (strain DSM 244 / SL1) (Ectothiorhodospira halophila (strain DSM 244 / SL1)).